The chain runs to 489 residues: Lysine--tRNA ligase (489 aa).

Residues Glu399 and Glu406 each contribute to the Mg(2+) site.

This sequence belongs to the class-II aminoacyl-tRNA synthetase family. Homodimer. Requires Mg(2+) as cofactor.

The protein localises to the cytoplasm. It catalyses the reaction tRNA(Lys) + L-lysine + ATP = L-lysyl-tRNA(Lys) + AMP + diphosphate. The sequence is that of Lysine--tRNA ligase from Synechococcus sp. (strain CC9311).